Here is a 64-residue protein sequence, read N- to C-terminus: Large ribosomal subunit protein bL35 (64 aa).

Disordered stretches follow at residues 1–22 and 34–64; these read MPKAKTHSGASKRFRRTGTGKI and EHKPSTRTRRLDGHTRVSANDTQRVNSLLNG. Residues 34–48 show a composition bias toward basic and acidic residues; the sequence is EHKPSTRTRRLDGHT. Residues 50 to 64 are compositionally biased toward polar residues; sequence VSANDTQRVNSLLNG.

This sequence belongs to the bacterial ribosomal protein bL35 family.

In Mycobacterium leprae (strain Br4923), this protein is Large ribosomal subunit protein bL35.